Here is a 143-residue protein sequence, read N- to C-terminus: Large ribosomal subunit protein uL15 (143 aa).

The segment at M1–P56 is disordered. A compositionally biased stretch (gly residues) spans R21 to A31.

Belongs to the universal ribosomal protein uL15 family. As to quaternary structure, part of the 50S ribosomal subunit.

Binds to the 23S rRNA. This Verminephrobacter eiseniae (strain EF01-2) protein is Large ribosomal subunit protein uL15.